Consider the following 76-residue polypeptide: Exodeoxyribonuclease 7 small subunit (76 aa).

It belongs to the XseB family. As to quaternary structure, heterooligomer composed of large and small subunits.

The protein resides in the cytoplasm. It carries out the reaction Exonucleolytic cleavage in either 5'- to 3'- or 3'- to 5'-direction to yield nucleoside 5'-phosphates.. Functionally, bidirectionally degrades single-stranded DNA into large acid-insoluble oligonucleotides, which are then degraded further into small acid-soluble oligonucleotides. The polypeptide is Exodeoxyribonuclease 7 small subunit (Arthrobacter sp. (strain FB24)).